A 126-amino-acid polypeptide reads, in one-letter code: Protein ApaG (126 aa).

The ApaG domain occupies 2-126; the sequence is SDPRYQVDVS…FRLAVPGALH (125 aa).

This Pseudomonas fluorescens (strain Pf0-1) protein is Protein ApaG.